The sequence spans 90 residues: UPF0213 protein lwe0147 (90 aa).

In terms of domain architecture, GIY-YIG spans Asn5–Ile83.

Belongs to the UPF0213 family.

The sequence is that of UPF0213 protein lwe0147 from Listeria welshimeri serovar 6b (strain ATCC 35897 / DSM 20650 / CCUG 15529 / CIP 8149 / NCTC 11857 / SLCC 5334 / V8).